The chain runs to 146 residues: MLMPRRVQHRKQHRYRTKGIAWRGSTLAFGDYGIQALEPAWVTAQQIEAARRAITNAVRRGGKVWIRVFPDKPVTKKPAETRMGSGKGNPEYWMDVVKPGRILFELAGVREELALEALTRAIHKLPCRCRIVKRERPGEAAEEEAS.

It belongs to the universal ribosomal protein uL16 family. In terms of assembly, part of the 50S ribosomal subunit.

Its function is as follows. Binds 23S rRNA and is also seen to make contacts with the A and possibly P site tRNAs. The polypeptide is Large ribosomal subunit protein uL16 (Thermomicrobium roseum (strain ATCC 27502 / DSM 5159 / P-2)).